The primary structure comprises 425 residues: Serine--tRNA ligase (425 aa).

233 to 235 contributes to the L-serine binding site; that stretch reads TAE. Residue 264–266 participates in ATP binding; sequence RRE. An L-serine-binding site is contributed by Glu287. 351-354 serves as a coordination point for ATP; it reads EISS. L-serine is bound at residue Ser385.

Belongs to the class-II aminoacyl-tRNA synthetase family. Type-1 seryl-tRNA synthetase subfamily. Homodimer. The tRNA molecule binds across the dimer.

The protein resides in the cytoplasm. It carries out the reaction tRNA(Ser) + L-serine + ATP = L-seryl-tRNA(Ser) + AMP + diphosphate + H(+). The catalysed reaction is tRNA(Sec) + L-serine + ATP = L-seryl-tRNA(Sec) + AMP + diphosphate + H(+). Its pathway is aminoacyl-tRNA biosynthesis; selenocysteinyl-tRNA(Sec) biosynthesis; L-seryl-tRNA(Sec) from L-serine and tRNA(Sec): step 1/1. In terms of biological role, catalyzes the attachment of serine to tRNA(Ser). Is also able to aminoacylate tRNA(Sec) with serine, to form the misacylated tRNA L-seryl-tRNA(Sec), which will be further converted into selenocysteinyl-tRNA(Sec). This is Serine--tRNA ligase from Synechococcus sp. (strain WH7803).